The sequence spans 413 residues: Tyrosine--tRNA ligase (413 aa).

A 'HIGH' region motif is present at residues 55 to 64 (PTRPDLHLGH). Positions 242–246 (KMSKS) match the 'KMSKS' region motif. Lys-245 serves as a coordination point for ATP. An S4 RNA-binding domain is found at 346-410 (VKLSYILREC…GKKAFRRLVK (65 aa)).

It belongs to the class-I aminoacyl-tRNA synthetase family. TyrS type 2 subfamily. Homodimer.

Its subcellular location is the cytoplasm. It carries out the reaction tRNA(Tyr) + L-tyrosine + ATP = L-tyrosyl-tRNA(Tyr) + AMP + diphosphate + H(+). Catalyzes the attachment of tyrosine to tRNA(Tyr) in a two-step reaction: tyrosine is first activated by ATP to form Tyr-AMP and then transferred to the acceptor end of tRNA(Tyr). The sequence is that of Tyrosine--tRNA ligase from Synechococcus sp. (strain JA-2-3B'a(2-13)) (Cyanobacteria bacterium Yellowstone B-Prime).